A 145-amino-acid polypeptide reads, in one-letter code: Large ribosomal subunit protein uL16 (145 aa).

Belongs to the universal ribosomal protein uL16 family. As to quaternary structure, part of the 50S ribosomal subunit.

Binds 23S rRNA and is also seen to make contacts with the A and possibly P site tRNAs. The protein is Large ribosomal subunit protein uL16 of Lachnospira eligens (strain ATCC 27750 / DSM 3376 / VPI C15-48 / C15-B4) (Eubacterium eligens).